A 395-amino-acid polypeptide reads, in one-letter code: Ribonuclease D (395 aa).

The 168-residue stretch at 14 to 181 (LITKSEDLAA…VYETLRDRLE (168 aa)) folds into the 3'-5' exonuclease domain. The HRDC domain occupies 219–300 (NRRYLGLLRA…AEARGLPDAD (82 aa)).

It belongs to the RNase D family. A divalent metal cation serves as cofactor.

The protein localises to the cytoplasm. It carries out the reaction Exonucleolytic cleavage that removes extra residues from the 3'-terminus of tRNA to produce 5'-mononucleotides.. Its function is as follows. Exonuclease involved in the 3' processing of various precursor tRNAs. Initiates hydrolysis at the 3'-terminus of an RNA molecule and releases 5'-mononucleotides. The polypeptide is Ribonuclease D (Granulibacter bethesdensis (strain ATCC BAA-1260 / CGDNIH1)).